We begin with the raw amino-acid sequence, 315 residues long: tRNA dimethylallyltransferase (315 aa).

Residue 13–20 (GPTAVGKT) participates in ATP binding. 15–20 (TAVGKT) provides a ligand contact to substrate. The segment at 38–41 (DSRL) is interaction with substrate tRNA.

It belongs to the IPP transferase family. Monomer. Requires Mg(2+) as cofactor.

The enzyme catalyses adenosine(37) in tRNA + dimethylallyl diphosphate = N(6)-dimethylallyladenosine(37) in tRNA + diphosphate. In terms of biological role, catalyzes the transfer of a dimethylallyl group onto the adenine at position 37 in tRNAs that read codons beginning with uridine, leading to the formation of N6-(dimethylallyl)adenosine (i(6)A). This is tRNA dimethylallyltransferase from Herpetosiphon aurantiacus (strain ATCC 23779 / DSM 785 / 114-95).